A 336-amino-acid polypeptide reads, in one-letter code: Large ribosomal subunit protein uL1 (336 aa).

Residues 1–245 (MANQKKVTNK…VKKTAKGKVI (245 aa)) are large ribosomal subunit protein uL1. The unknown stretch occupies residues 246 to 336 (ADDSAKGENK…DVKKAKTSKK (91 aa)). Residues 267–336 (AQKKKPSKHP…DVKKAKTSKK (70 aa)) are disordered. Residues 286–305 (KKKKVKKILKKAKPAKKAAV) show a composition bias toward basic residues. Residues 306 to 315 (AKKPVVVNKK) are compositionally biased toward low complexity.

This sequence belongs to the universal ribosomal protein uL1 family. In terms of assembly, part of the 50S ribosomal subunit.

In terms of biological role, binds directly to 23S rRNA. The L1 stalk is quite mobile in the ribosome, and is involved in E site tRNA release. Its function is as follows. Protein L1 is also a translational repressor protein, it controls the translation of the L11 operon by binding to its mRNA. The polypeptide is Large ribosomal subunit protein uL1 (Malacoplasma penetrans (strain HF-2) (Mycoplasma penetrans)).